Consider the following 78-residue polypeptide: MKLTCMMIIAVLFLTAWTFVMADDPRDEPEARDEMNPAASKLNERGCLEVDYFCGIPFANNGLCCSGNCVFVCTPQGK.

A signal peptide spans 1–22 (MKLTCMMIIAVLFLTAWTFVMA). The propeptide occupies 23–45 (DDPRDEPEARDEMNPAASKLNER). Disulfide bonds link Cys47-Cys65, Cys54-Cys69, and Cys64-Cys73. The residue at position 76 (Gln76) is a Glutamine amide.

In terms of tissue distribution, expressed by the venom duct.

It localises to the secreted. In terms of biological role, omega-conotoxins act at presynaptic membranes, they bind and block voltage-gated calcium channels (Cav). Acts on high voltage-activated (HVA) calcium currents in molluscan neurons. This chain is Omega-conotoxin PnVIA, found in Conus pennaceus (Feathered cone).